The sequence spans 149 residues: Endonuclease I (149 aa).

As to quaternary structure, homodimer.

The enzyme catalyses Endonucleolytic cleavage to 5'-phosphooligonucleotide end-products.. Its function is as follows. Junction-resolving enzyme that selectively binds and cleaves four-way (Holliday) DNA junctions present after viral genomic replication. These intermediates are created during DNA repair, processing of stalled replication forks and homologous genetic recombination. Introduces two nicks on the two non-crossing strands, at 5' sides of the junction. Also participates together with gp6 in the degradation of host chromosome to provide nucleotides for phage DNA synthesis. In Escherichia coli (Bacteriophage T7), this protein is Endonuclease I.